A 693-amino-acid chain; its full sequence is Phosphoribosylformylglycinamidine synthase subunit PurL (693 aa).

Residue histidine 34 is part of the active site. Residues tyrosine 37 and lysine 76 each contribute to the ATP site. Glutamate 78 serves as a coordination point for Mg(2+). Residues 79-82 and arginine 101 each bind substrate; that span reads SHNH. Histidine 80 acts as the Proton acceptor in catalysis. Aspartate 102 provides a ligand contact to Mg(2+). Glutamine 222 is a substrate binding site. Aspartate 248 contacts Mg(2+). A substrate-binding site is contributed by 292–294; it reads ETQ. ATP is bound by residues aspartate 470 and glycine 507. Serine 510 is a binding site for substrate.

It belongs to the FGAMS family. As to quaternary structure, monomer. Part of the FGAM synthase complex composed of 1 PurL, 1 PurQ and 2 PurS subunits.

It localises to the cytoplasm. It carries out the reaction N(2)-formyl-N(1)-(5-phospho-beta-D-ribosyl)glycinamide + L-glutamine + ATP + H2O = 2-formamido-N(1)-(5-O-phospho-beta-D-ribosyl)acetamidine + L-glutamate + ADP + phosphate + H(+). Its pathway is purine metabolism; IMP biosynthesis via de novo pathway; 5-amino-1-(5-phospho-D-ribosyl)imidazole from N(2)-formyl-N(1)-(5-phospho-D-ribosyl)glycinamide: step 1/2. Functionally, part of the phosphoribosylformylglycinamidine synthase complex involved in the purines biosynthetic pathway. Catalyzes the ATP-dependent conversion of formylglycinamide ribonucleotide (FGAR) and glutamine to yield formylglycinamidine ribonucleotide (FGAM) and glutamate. The FGAM synthase complex is composed of three subunits. PurQ produces an ammonia molecule by converting glutamine to glutamate. PurL transfers the ammonia molecule to FGAR to form FGAM in an ATP-dependent manner. PurS interacts with PurQ and PurL and is thought to assist in the transfer of the ammonia molecule from PurQ to PurL. This is Phosphoribosylformylglycinamidine synthase subunit PurL from Pyrobaculum neutrophilum (strain DSM 2338 / JCM 9278 / NBRC 100436 / V24Sta) (Thermoproteus neutrophilus).